Reading from the N-terminus, the 425-residue chain is Polyribonucleotide 5'-hydroxyl-kinase Clp1 (425 aa).

ATP-binding positions include glutamate 22, lysine 62, and 124 to 129 (DVGKST).

Belongs to the Clp1 family. Clp1 subfamily. In terms of assembly, component of the tRNA splicing endonuclease complex. Component of pre-mRNA cleavage complex II (CF-II).

The protein resides in the nucleus. It carries out the reaction a 5'-end dephospho-2'-deoxyribonucleoside-DNA + ATP = a 5'-end 5'-phospho-2'-deoxyribonucleoside-DNA + ADP + H(+). The enzyme catalyses a 5'-end dephospho-ribonucleoside-RNA + ATP = a 5'-end 5'-phospho-ribonucleoside-RNA + ADP + H(+). Functionally, polynucleotide kinase that can phosphorylate the 5'-hydroxyl groups of double-stranded RNA (dsRNA), single-stranded RNA (ssRNA), double stranded DNA (dsDNA) and double-stranded DNA:RNA hybrids. dsRNA is phosphorylated more efficiently than dsDNA, and the RNA component of a DNA:RNA hybrid is phosphorylated more efficiently than the DNA component. Plays a role in both tRNA splicing and mRNA 3'-end formation. Component of the tRNA splicing endonuclease complex: phosphorylates the 5'-terminus of the tRNA 3'-exon during tRNA splicing; this phosphorylation event is a prerequisite for the subsequent ligation of the two exon halves and the production of a mature tRNA. Its role in tRNA splicing and maturation is required for cerebellar development. Component of the pre-mRNA cleavage complex II (CF-II), which seems to be required for mRNA 3'-end formation. Also phosphorylates the 5'-terminus of exogenously introduced short interfering RNAs (siRNAs), which is a necessary prerequisite for their incorporation into the RNA-induced silencing complex (RISC). However, endogenous siRNAs and microRNAs (miRNAs) that are produced by the cleavage of dsRNA precursors by dicer1 already contain a 5'-phosphate group, so this protein may be dispensible for normal RNA-mediated gene silencing. This is Polyribonucleotide 5'-hydroxyl-kinase Clp1 from Gallus gallus (Chicken).